A 120-amino-acid polypeptide reads, in one-letter code: Large ribosomal subunit protein uL18 (120 aa).

It belongs to the universal ribosomal protein uL18 family. In terms of assembly, part of the 50S ribosomal subunit; part of the 5S rRNA/L5/L18/L25 subcomplex. Contacts the 5S and 23S rRNAs.

In terms of biological role, this is one of the proteins that bind and probably mediate the attachment of the 5S RNA into the large ribosomal subunit, where it forms part of the central protuberance. This chain is Large ribosomal subunit protein uL18, found in Rhizobium etli (strain CIAT 652).